The chain runs to 321 residues: MATGGQQKENTLLHLFAGGCGGTVGAIFTCPLEVIKTRLQSSRLALRTVYYPQVHLGTISGAGMVRPTSVTPGLFQVLKSILEKEGPKSLFRGLGPNLVGVAPSRAVYFACYSKAKEQFNGIFVPNSNIVHIFSAGSAAFITNSLMNPIWMVKTRMQLEQKVRGSKQMNTLQCARYVYQTEGIRGFYRGLTASYAGISETIICFAIYESLKKYLKEAPLASSANGTEKNSTSFFGLMAAAALSKGCASCIAYPHEVIRTRLREEGTKYKSFVQTARLVFREEGYLAFYRGLFAQLIRQIPNTAIVLSTYELIVYLLEDRTQ.

Solcar repeat units follow at residues 9–118 (ENTL…AKEQ), 126–213 (NSNI…LKKY), and 231–315 (TSFF…IVYL). Transmembrane regions (helical) follow at residues 12 to 32 (LLHLFAGGCGGTVGAIFTCPL), 49 to 65 (VYYPQVHLGTISGAGMV), 121 to 141 (GIFVPNSNIVHIFSAGSAAFI), 190 to 210 (LTASYAGISETIICFAIYESL), 233 to 253 (FFGLMAAAALSKGCASCIAYP), and 298 to 318 (QIPNTAIVLSTYELIVYLLED).

Belongs to the mitochondrial carrier (TC 2.A.29) family. As to expression, expressed in the central nervous system. Also expressed in testis and skeletal muscle. Weakly expressed in heart, liver, kidney, prostate, colon and peripheral blood leukocytes.

Its subcellular location is the mitochondrion inner membrane. It catalyses the reaction UTP(in) + UDP(out) = UTP(out) + UDP(in). The catalysed reaction is dUTP(out) + UTP(in) = dUTP(in) + UTP(out). The enzyme catalyses 5-methyl-UTP(out) + UTP(in) = 5-methyl-UTP(in) + UTP(out). It carries out the reaction 5-methyl-UDP(out) + UTP(in) = 5-methyl-UDP(in) + UTP(out). It catalyses the reaction UTP(in) + CTP(out) = UTP(out) + CTP(in). The catalysed reaction is CDP(out) + UTP(in) = CDP(in) + UTP(out). The enzyme catalyses dCTP(out) + UTP(in) = dCTP(in) + UTP(out). It carries out the reaction dCDP(out) + UTP(in) = dCDP(in) + UTP(out). It catalyses the reaction UTP(in) + GTP(out) = UTP(out) + GTP(in). The catalysed reaction is UTP(in) + GDP(out) = UTP(out) + GDP(in). The enzyme catalyses dGTP(out) + UTP(in) = dGTP(in) + UTP(out). It carries out the reaction dGDP(out) + UTP(in) = dGDP(in) + UTP(out). It catalyses the reaction ITP(out) + UTP(in) = ITP(in) + UTP(out). With respect to regulation, inhibited by pyridoxal 5'-phosphate, 4,7-diphenyl-1,10-phenanthroline, tannic acid, and mercurials (mercury dichloride, mersalyl acid, p-hydroxymercuribenzoate). Mitochondrial transporter that imports/exports pyrimidine nucleotides into and from mitochondria. Selectively transports uridine, thymidine, guanosine, cytosine and inosine (deoxy)nucleoside di- and triphosphates by an antiport mechanism. May import (deoxy)nucleoside triphosphates in exchange for intramitochondrial (deoxy)nucleoside diphosphates, thus providing precursors necessary for de novo synthesis of mitochondrial DNA and RNA while exporting products of their catabolism. Participates in mitochondrial genome maintenance, regulation of mitochondrial membrane potential and mitochondrial respiration. Upon INS or IGF1 stimulation regulates cell growth and proliferation by controlling mitochondrial DNA replication and transcription, the ratio of mitochondria-to nuclear-encoded components of the electron transport chain resulting in control of mitochondrial ROS production. Participates in dendritic cell endocytosis and may associate with mitochondrial oxidative phosphorylation. The chain is Solute carrier family 25 member 33 (SLC25A33) from Homo sapiens (Human).